The sequence spans 512 residues: MFPLISFSPTSLDFTFFAIIISGFVFIITRWNSNSKKRLNLPPGPPGWPVVGNLFQFARSGKPFFEYAEDLKKTYGPIFTLRMGTRTMIILSDATLVHEALIQRGALFASRPAENPTRTIFSCNKFTVNAAKYGPVWRSLRRNMVQNMLSSTRLKEFGKLRQSAMDKLIERIKSEARDNDGLIWVLKNARFAAFCILLEMCFGIEMDEETIEKMDEILKTVLMTVDPRIDDYLPILAPFFSKERKRALEVRREQVDYVVGVIERRRRAIQNPGSDKTASSFSYLDTLFDLKIEGRKTTPSNEELVTLCSEFLNGGTDTTGTAIEWGIAQLIANPEIQSRLYDEIKSTVGDDRRVDEKDVDKMVFLQAFVKELLRKHPPTYFSLTHAVMETTTLAGYDIPAGVNVEVYLPGISEDPRIWNNPKKFDPDRFMLGKEDADITGISGVKMIPFGVGRRICPGLAMATIHVHLMLARMVQEFEWCAHPPGSEIDFAGKLEFTVVMKNPLRAMVKPRI.

Residues 9-29 (PTSLDFTFFAIIISGFVFIIT) traverse the membrane as a helical segment. Residue C456 participates in heme binding.

This sequence belongs to the cytochrome P450 family. Heme is required as a cofactor.

The protein localises to the membrane. In terms of biological role, catalyzes the epoxidation of physiological unsaturated fatty acids in vitro. Can use laurate, oleate, linoleate, linolenate and vernolate as substrate. This Arabidopsis thaliana (Mouse-ear cress) protein is Cytochrome P450 77A4 (CYP77A4).